The following is a 1195-amino-acid chain: Protein PIP82 (1195 aa).

Residues 1–10 (MSHQEQQFQH) show a composition bias toward low complexity. 9 disordered regions span residues 1 to 55 (MSHQ…IGSS), 85 to 132 (KLRG…SQQF), 291 to 471 (NTFD…TANL), 493 to 515 (KVAK…GASG), 544 to 567 (QRNA…GHEP), 613 to 637 (EEDN…GIAT), 702 to 771 (MSPV…IVPK), 833 to 977 (SAGS…VKTS), and 1060 to 1195 (QITV…VVEI). The segment covering 11–26 (YPHHQHHHHHHHHHIH) has biased composition (basic residues). The span at 37 to 50 (RSSDLEPNRSRNTD) shows a compositional bias: basic and acidic residues. Residues 109–118 (GSAKDGAGAA) are compositionally biased toward low complexity. The segment covering 119-132 (QQTHLQVAGQSQQF) has biased composition (polar residues). The segment covering 300–313 (HEQFERGKISHETD) has biased composition (basic and acidic residues). Over residues 351-360 (QQAAAEESPQ) the composition is skewed to low complexity. Positions 361 to 371 (ANPPPPPPPRP) are enriched in pro residues. A phospho-regulated basic and hydrophobic (PRBH) motif region spans residues 400–450 (ETTKTAENADENNASRKLSIRQNIKRLRKSIKRPSKIKSKAAAPVPDSDEE). Residues 422–438 (NIKRLRKSIKRPSKIKS) are compositionally biased toward basic residues. Over residues 494–505 (VAKEPEELETKA) the composition is skewed to basic and acidic residues. The segment covering 545 to 560 (RNANNQNATTSKQPKP) has biased composition (polar residues). Polar residues-rich tracts occupy residues 732-742 (SGPQKSMSYSP) and 856-867 (RVQSPQIGNSRE). Positions 872–891 (QEEEDKEAERDSEEEEEERD) are enriched in acidic residues. Pro residues-rich tracts occupy residues 898-910 (SESP…PQRR) and 925-939 (VPPP…PPPS). The span at 940–968 (VETIPSVASLPSPAPVTRSMAQRSASMSR) shows a compositional bias: low complexity. Residues 1075–1085 (QSDQSDQSAHQ) show a composition bias toward polar residues. A compositionally biased stretch (basic and acidic residues) spans 1086–1095 (EITDTRKTKS). Residues 1102–1111 (RQNSNCSRSE) are compositionally biased toward polar residues. 2 stretches are compositionally biased toward low complexity: residues 1114–1149 (SPLS…QNPS) and 1179–1195 (SYYS…VVEI).

Post-translationally, phosphorylated by aPKC which lowers lipid affinity and promotes dissociation from the cell cortex. In the photoreceptor cells, aPKC-mediated phosphorylation leads to its displacement from the stalk apical cortex and thus restricts its localization to the rhabdomeric apical cortex where it functions. Dephosphorylation appears to be light-dependent. In terms of tissue distribution, restricted to photoreceptor cells (at protein level). Not detected until approximately 48hrs after puparium formation (APF) and then maintained in the photoreceptor cells post-eclosion (at protein level).

The protein resides in the cytoplasm. It is found in the cell cortex. Its subcellular location is the cytosol. It localises to the cell projection. The protein localises to the rhabdomere. Functionally, required for the morphological differentiation and maintenance of the rhabdomeric photoreceptor apical domain. Acts as a downstream component of the gl and Pph13 transcriptional pathway which is required for photoreceptor cell development. Likely to function by regulating the trafficking or retention of rhabdomeric proteins including the phototransduction proteins ninaE and didum. The protein is Protein PIP82 of Drosophila melanogaster (Fruit fly).